Consider the following 134-residue polypeptide: Sec-independent protein translocase protein TatB (134 aa).

The chain crosses the membrane as a helical span at residues F2–G22. Positions A90 to K134 are disordered. Polar residues predominate over residues S123–K134.

Belongs to the TatB family. In terms of assembly, the Tat system comprises two distinct complexes: a TatABC complex, containing multiple copies of TatA, TatB and TatC subunits, and a separate TatA complex, containing only TatA subunits. Substrates initially bind to the TatABC complex, which probably triggers association of the separate TatA complex to form the active translocon.

Its subcellular location is the cell inner membrane. In terms of biological role, part of the twin-arginine translocation (Tat) system that transports large folded proteins containing a characteristic twin-arginine motif in their signal peptide across membranes. Together with TatC, TatB is part of a receptor directly interacting with Tat signal peptides. TatB may form an oligomeric binding site that transiently accommodates folded Tat precursor proteins before their translocation. This chain is Sec-independent protein translocase protein TatB, found in Shewanella frigidimarina (strain NCIMB 400).